Consider the following 64-residue polypeptide: Alpha-conotoxin Lt14.1 (64 aa).

The first 20 residues, 1 to 20 (MKLSVMFIVFLMLTMPMTCA), serve as a signal peptide directing secretion. A propeptide spanning residues 21–50 (GISRSATNGGEADVRAHDKAANLMALLQER) is cleaved from the precursor. 2 disulfides stabilise this stretch: Cys-52–Cys-60 and Cys-56–Cys-63. At Cys-63 the chain carries Cysteine amide.

It belongs to the conotoxin L superfamily. May contain a 4-hydroxyproline. As to expression, expressed by the venom duct.

Its subcellular location is the secreted. Functionally, alpha-conotoxins act on postsynaptic membranes, they bind to the nicotinic acetylcholine receptors (nAChR) and thus inhibit them. This synthetic peptide displays analgesic activity in a hot plate assay. Analgesia is also observed against second phase pain in formalin-induced inflammatory pain model, and in a rat model of mechanically-induced pain. Effects downstream of nAChR are inhibition of calcium influx, inhibition of ERK1/2 phosphorylation and inhibition of c-fos/NOS expression. Genes associated with drug dependence are not up-regulated by this toxin. Treatment with this toxin reversed morphine withdrawal symptoms in mice. The sequence is that of Alpha-conotoxin Lt14.1 from Conus litteratus (Lettered cone).